Here is an 87-residue protein sequence, read N- to C-terminus: MKPNIHPEYRTVVFHDTSVDEYFKIGSTIKTDREIELDGVTYPYVTIDVSSKSHPFYTGKLRTVASEGNVARFTQRFGRFVSTKKGA.

The protein belongs to the bacterial ribosomal protein bL31 family. Type B subfamily. Part of the 50S ribosomal subunit.

The chain is Large ribosomal subunit protein bL31B from Shigella boydii serotype 4 (strain Sb227).